A 142-amino-acid polypeptide reads, in one-letter code: MEFLYNLHSGWHVDQAIVTEEERLVVVRFGRTADRECMLMDEMLASVAEKVRNFVAIYLCDIDEVPDFNDMYELNDNMCLMFFYKNKHMMCDFGTGNNNKMNFLPDDKQELIDIMETIFRGARKNKGIVVSPYDYNHKRPSD.

The protein belongs to the DIM1 family. Component of the 25S [U4/U6.U5] tri-snRNP.

It is found in the nucleus. Its function is as follows. Essential role in pre-mRNA splicing. Also essential for entry into mitosis (G2/M progression) as well as for chromosome segregation during mitosis. The polypeptide is Spliceosomal protein DIB1 (DIB1) (Candida glabrata (strain ATCC 2001 / BCRC 20586 / JCM 3761 / NBRC 0622 / NRRL Y-65 / CBS 138) (Yeast)).